Consider the following 156-residue polypeptide: Small ribosomal subunit protein uS7 (156 aa).

Belongs to the universal ribosomal protein uS7 family. Part of the 30S ribosomal subunit. Contacts proteins S9 and S11.

Its function is as follows. One of the primary rRNA binding proteins, it binds directly to 16S rRNA where it nucleates assembly of the head domain of the 30S subunit. Is located at the subunit interface close to the decoding center, probably blocks exit of the E-site tRNA. The sequence is that of Small ribosomal subunit protein uS7 from Dehalococcoides mccartyi (strain ATCC BAA-2100 / JCM 16839 / KCTC 5957 / BAV1).